The primary structure comprises 106 residues: Violacin-A (106 aa).

Positions 1–29 (MDAQKMKMVIGLVLVATTAFALMIPAASA) are cleaved as a signal peptide. Residues 30-79 (VDDFITRRAYDNLVKSGAIKDIPVMAKTIISNPVLEEGMLTYYTNKKLGD) constitute a propeptide that is removed on maturation. Intrachain disulfides connect cysteine 84–cysteine 98, cysteine 88–cysteine 100, and cysteine 93–cysteine 105.

This sequence belongs to the cyclotide family. Moebius subfamily. Violacin-A is not a cyclic peptide.

Functionally, probably participates in a plant defense mechanism. Has low hemolytic activity. The polypeptide is Violacin-A (Viola odorata (Sweet violet)).